The chain runs to 396 residues: Serine/threonine-protein kinase GRIK1 (396 aa).

The disordered stretch occupies residues 22–65 (ERSRHSPNPYDDDTYSHDSGETSNPGGDDEEGEEEEEVEELSRS). Residues 48–60 (GDDEEGEEEEEVE) show a composition bias toward acidic residues. In terms of domain architecture, Protein kinase spans 108 to 369 (FVRERKIGSG…LKAVAEHPWI (262 aa)). Residues 114–122 (IGSGSYGKV) and K137 each bind ATP. T154 bears the Phosphothreonine; by autocatalysis mark. Residue D239 is the Proton acceptor of the active site. S261 bears the Phosphoserine; by KIN10 mark.

Belongs to the protein kinase superfamily. Ser/Thr protein kinase family. In terms of assembly, associates with the SNF1-related protein kinase (SnRK) complex. Interacts with AL1, a geminivirus (TGMV) protein essential for viral replication. Expressed in shoot apical meristem, leaf primordium and emerging petiole (at protein level).

Its subcellular location is the cytoplasm. It localises to the nucleus. It catalyses the reaction L-seryl-[protein] + ATP = O-phospho-L-seryl-[protein] + ADP + H(+). The enzyme catalyses L-threonyl-[protein] + ATP = O-phospho-L-threonyl-[protein] + ADP + H(+). Its activity is regulated as follows. Activated when autophosphorylated at Thr-154 and inactivated when phosphorylated at Ser-261 by SnRK1.1/KIN10. Its function is as follows. Activates SnRK1.1/KIN10 and SnRK1.2/KIN11 by phosphorylation of their activation-loop 'Thr-198' and 'Thr-176', respectively. Required for the regulation by SnRK1 kinases of the transcription of a large set of genes, the modification the activity of metabolic enzymes, and the control of various nutrient-responsive cellular developmental processes. This chain is Serine/threonine-protein kinase GRIK1 (GRIK1), found in Arabidopsis thaliana (Mouse-ear cress).